We begin with the raw amino-acid sequence, 344 residues long: uncharacterized protein (344 aa).

It belongs to the MG414/MG415 family.

This is an uncharacterized protein from Mycoplasma pneumoniae (strain ATCC 29342 / M129 / Subtype 1) (Mycoplasmoides pneumoniae).